The sequence spans 272 residues: Insulin-like growth factor-binding protein 1 (272 aa).

The signal sequence occupies residues 1–25 (MPEVPAAGLWPFLLLLAVQVSTVAS). The region spanning 28-109 (QPWHCAPCSA…TRGQGACVPE (82 aa)) is the IGFBP N-terminal domain. Intrachain disulfides connect cysteine 32-cysteine 59, cysteine 35-cysteine 61, cysteine 43-cysteine 62, cysteine 50-cysteine 65, and cysteine 73-cysteine 86. A phosphoserine mark is found at serine 139, serine 157, and serine 169. A Phosphothreonine modification is found at threonine 170. Tyrosine 171 bears the Phosphotyrosine mark. In terms of domain architecture, Thyroglobulin type-1 spans 186 to 264 (KQPCRRELYK…SLEIRGDPNC (79 aa)). 3 disulfides stabilise this stretch: cysteine 189–cysteine 219, cysteine 230–cysteine 241, and cysteine 243–cysteine 264. At serine 255 the chain carries Phosphoserine. The Cell attachment site motif lies at 259–261 (RGD).

Binds equally well IGF1 and IGF2. Interacts with integrin ITGA5:ITGB1. Interacts with VHL; this interaction inhibits HIF1A degradation.

The protein resides in the secreted. Its function is as follows. Multifunctional protein that plays a critical role in regulating the availability of IGFs such as IGF1 and IGF2 to their receptors and thereby regulates IGF-mediated cellular processes including cell migration, proliferation, differentiation or apoptosis in a cell-type specific manner. Also plays a positive role in cell migration by interacting with integrin ITGA5:ITGB1 through its RGD motif. Mechanistically, binding to integrins leads to activation of focal adhesion kinase/PTK2 and stimulation of the mitogen-activated protein kinase (MAPK) pathway. Regulates cardiomyocyte apoptosis by suppressing HIF-1alpha/HIF1A degradation through ubiquitination. This Ictidomys tridecemlineatus (Thirteen-lined ground squirrel) protein is Insulin-like growth factor-binding protein 1 (IGFBP1).